The chain runs to 206 residues: Cytochrome c biogenesis ATP-binding export protein CcmA (206 aa).

The region spanning 2-206 (LEARDVVCIR…IQLTPSEGTP (205 aa)) is the ABC transporter domain. 34–41 (GANGVGKT) lines the ATP pocket.

Belongs to the ABC transporter superfamily. CcmA exporter (TC 3.A.1.107) family. The complex is composed of two ATP-binding proteins (CcmA) and two transmembrane proteins (CcmB).

The protein localises to the cell inner membrane. It carries out the reaction heme b(in) + ATP + H2O = heme b(out) + ADP + phosphate + H(+). Functionally, part of the ABC transporter complex CcmAB involved in the biogenesis of c-type cytochromes; once thought to export heme, this seems not to be the case, but its exact role is uncertain. Responsible for energy coupling to the transport system. This Pectobacterium atrosepticum (strain SCRI 1043 / ATCC BAA-672) (Erwinia carotovora subsp. atroseptica) protein is Cytochrome c biogenesis ATP-binding export protein CcmA.